The following is an 814-amino-acid chain: Acyl-coenzyme A dehydrogenase (814 aa).

The active-site Proton acceptor is the Glu-497.

This sequence belongs to the acyl-CoA dehydrogenase family. The cofactor is FAD.

It carries out the reaction a medium-chain 2,3-saturated fatty acyl-CoA + oxidized [electron-transfer flavoprotein] + H(+) = a medium-chain (2E)-enoyl-CoA + reduced [electron-transfer flavoprotein]. The enzyme catalyses a long-chain 2,3-saturated fatty acyl-CoA + oxidized [electron-transfer flavoprotein] + H(+) = a long-chain (2E)-enoyl-CoA + reduced [electron-transfer flavoprotein]. The protein operates within lipid metabolism; fatty acid beta-oxidation. Its function is as follows. Catalyzes the dehydrogenation of acyl-coenzymes A (acyl-CoAs) to 2-enoyl-CoAs, the first step of the beta-oxidation cycle of fatty acid degradation. Is required for E.coli to utilize dodecanoate or oleate as the sole carbon and energy source for growth. The chain is Acyl-coenzyme A dehydrogenase from Escherichia coli (strain K12).